A 254-amino-acid polypeptide reads, in one-letter code: Imidazole glycerol phosphate synthase subunit HisF (254 aa).

Residues aspartate 11 and aspartate 130 contribute to the active site.

It belongs to the HisA/HisF family. In terms of assembly, heterodimer of HisH and HisF.

It localises to the cytoplasm. The catalysed reaction is 5-[(5-phospho-1-deoxy-D-ribulos-1-ylimino)methylamino]-1-(5-phospho-beta-D-ribosyl)imidazole-4-carboxamide + L-glutamine = D-erythro-1-(imidazol-4-yl)glycerol 3-phosphate + 5-amino-1-(5-phospho-beta-D-ribosyl)imidazole-4-carboxamide + L-glutamate + H(+). Its pathway is amino-acid biosynthesis; L-histidine biosynthesis; L-histidine from 5-phospho-alpha-D-ribose 1-diphosphate: step 5/9. In terms of biological role, IGPS catalyzes the conversion of PRFAR and glutamine to IGP, AICAR and glutamate. The HisF subunit catalyzes the cyclization activity that produces IGP and AICAR from PRFAR using the ammonia provided by the HisH subunit. The polypeptide is Imidazole glycerol phosphate synthase subunit HisF (Halorhodospira halophila (strain DSM 244 / SL1) (Ectothiorhodospira halophila (strain DSM 244 / SL1))).